The primary structure comprises 61 residues: Large ribosomal subunit protein uL30 (61 aa).

It belongs to the universal ribosomal protein uL30 family. As to quaternary structure, part of the 50S ribosomal subunit.

This chain is Large ribosomal subunit protein uL30, found in Nitrosomonas eutropha (strain DSM 101675 / C91 / Nm57).